The sequence spans 71 residues: Beta-defensin 25 (71 aa).

An N-terminal signal peptide occupies residues M1–T22. 3 cysteine pairs are disulfide-bonded: C27–C54, C34–C48, and C38–C55.

This sequence belongs to the beta-defensin family.

Its subcellular location is the secreted. Functionally, has antibacterial activity. In Rattus norvegicus (Rat), this protein is Beta-defensin 25 (Defb25).